The following is a 496-amino-acid chain: Probable cytosol aminopeptidase (496 aa).

Lys262 and Asp267 together coordinate Mn(2+). Lys274 is an active-site residue. Positions 285, 344, and 346 each coordinate Mn(2+). The active site involves Arg348.

Belongs to the peptidase M17 family. Mn(2+) is required as a cofactor.

The protein resides in the cytoplasm. The catalysed reaction is Release of an N-terminal amino acid, Xaa-|-Yaa-, in which Xaa is preferably Leu, but may be other amino acids including Pro although not Arg or Lys, and Yaa may be Pro. Amino acid amides and methyl esters are also readily hydrolyzed, but rates on arylamides are exceedingly low.. The enzyme catalyses Release of an N-terminal amino acid, preferentially leucine, but not glutamic or aspartic acids.. Functionally, presumably involved in the processing and regular turnover of intracellular proteins. Catalyzes the removal of unsubstituted N-terminal amino acids from various peptides. The protein is Probable cytosol aminopeptidase of Rhizobium leguminosarum bv. trifolii (strain WSM2304).